Reading from the N-terminus, the 179-residue chain is Large ribosomal subunit protein bL17 (179 aa).

The disordered stretch occupies residues 123–179 (RTRGTDTLPDTVTDTGPDSAPDPVPGSEPGSAAGDLPDADTAPADPGESSSNQRVIR). Low complexity predominate over residues 154-168 (AAGDLPDADTAPADP). Over residues 170–179 (ESSSNQRVIR) the composition is skewed to polar residues.

The protein belongs to the bacterial ribosomal protein bL17 family. Part of the 50S ribosomal subunit. Contacts protein L32.

The chain is Large ribosomal subunit protein bL17 from Tropheryma whipplei (strain Twist) (Whipple's bacillus).